The chain runs to 481 residues: Ribulose bisphosphate carboxylase large chain (481 aa).

A propeptide spanning residues methionine 1–serine 2 is cleaved from the precursor. Residue proline 3 is modified to N-acetylproline. Position 14 is an N6,N6,N6-trimethyllysine (lysine 14). Asparagine 123 and threonine 173 together coordinate substrate. Lysine 175 (proton acceptor) is an active-site residue. Lysine 177 contacts substrate. Residues lysine 201, aspartate 203, and glutamate 204 each coordinate Mg(2+). The residue at position 201 (lysine 201) is an N6-carboxylysine. Residue histidine 294 is the Proton acceptor of the active site. Substrate is bound by residues arginine 295, histidine 327, and serine 379.

This sequence belongs to the RuBisCO large chain family. Type I subfamily. Heterohexadecamer of 8 large chains and 8 small chains; disulfide-linked. The disulfide link is formed within the large subunit homodimers. The cofactor is Mg(2+). The disulfide bond which can form in the large chain dimeric partners within the hexadecamer appears to be associated with oxidative stress and protein turnover.

Its subcellular location is the plastid. It catalyses the reaction 2 (2R)-3-phosphoglycerate + 2 H(+) = D-ribulose 1,5-bisphosphate + CO2 + H2O. The catalysed reaction is D-ribulose 1,5-bisphosphate + O2 = 2-phosphoglycolate + (2R)-3-phosphoglycerate + 2 H(+). In terms of biological role, ruBisCO catalyzes two reactions: the carboxylation of D-ribulose 1,5-bisphosphate, the primary event in carbon dioxide fixation, as well as the oxidative fragmentation of the pentose substrate in the photorespiration process. Both reactions occur simultaneously and in competition at the same active site. This chain is Ribulose bisphosphate carboxylase large chain, found in Cuscuta sandwichiana (Kauna'oa).